A 528-amino-acid chain; its full sequence is Importin subunit alpha-2 (528 aa).

The segment covering 1 to 15 (MADDSASPSPSSASP) has biased composition (low complexity). Positions 1 to 36 (MADDSASPSPSSASPLQHHREALKSSVRNTAASRRR) are disordered. ARM repeat units lie at residues 125 to 165 (VPLV…NIAA), 167 to 206 (EPEE…NVAG), 209 to 248 (AELR…NLIK), 253 to 292 (KAAN…YLSA), 294 to 335 (SDRG…NLIA), 338 to 383 (DYMV…NIAA), 386 to 425 (FEHK…NLCV), and 438 to 477 (VEHL…LVMR).

This sequence belongs to the importin alpha family. In terms of assembly, forms a complex with importin subunit beta-1. The whole complex, most stable and composed of importin alpha, importin beta and NLS substrate, is referred to as PTAC or pore targeting complex. As to expression, expressed in root, callus, and etiolated leaf. Low expression in green leaf.

The protein resides in the cytoplasm. Its subcellular location is the perinuclear region. Its function is as follows. Binds specifically and directly to substrates containing either a simple or bipartite NLS motif. Promotes docking of import substrates to the nuclear envelope. The sequence is that of Importin subunit alpha-2 from Oryza sativa subsp. japonica (Rice).